Reading from the N-terminus, the 1051-residue chain is Putative helicase/primase complex protein (1051 aa).

Belongs to the asfivirus F1055L family.

In terms of biological role, may be involved in DNA replication. This chain is Putative helicase/primase complex protein, found in Ornithodoros (relapsing fever ticks).